The primary structure comprises 3343 residues: Breast cancer type 2 susceptibility protein homolog (3343 aa).

The interaction with PALB2 stretch occupies residues Met1–Pro40. The tract at residues Pro40 to Gln60 is disordered. Basic and acidic residues predominate over residues Glu45 to Gly56. The residue at position 70 (Ser70) is a Phosphoserine. The interval Ile348 to Ser381 is disordered. Residues Ser359–Ser381 show a composition bias toward polar residues. Residues Ser475 and Ser736 each carry the phosphoserine modification. The tract at residues Pro622–Leu982 is interaction with NPM1. BRCA2 repeat units lie at residues Asn984 to Glu1018, Lys1197 to Asn1231, Met1405 to Glu1439, Lys1503 to Tyr1537, Cys1645 to Glu1669, Phe1828 to Asp1845, Pro1939 to Gly1973, and Ser2019 to Leu2053. Residues His985–Glu2050 are interaction with RAD51. Disordered regions lie at residues Thr2059–Thr2138, Pro2297–Ser2356, and Asp2377–Asn2407. Position 2063 is a phosphoserine (Ser2063). Polar residues-rich tracts occupy residues Pro2083–Thr2094 and Ser2101–Gln2125. Residues Arg2233 to Ser2300 are interaction with HSF2BP. Polar residues-rich tracts occupy residues Thr2307–Gln2320 and Gly2332–Ala2342. The tract at residues Thr2313 to Val2475 is interaction with FANCD2. The span at Arg2344–Ser2356 shows a compositional bias: basic and acidic residues. The tract at residues Met2411–Glu2762 is interaction with SEM1. A Nuclear export signal; masked by interaction with SEM1 motif is present at residues Ala2612–Thr2628. Residues Asp3114–Cys3163 form a disordered region. Over residues Pro3147–Cys3163 the composition is skewed to polar residues. The residue at position 3222 (Ser3222) is a Phosphoserine; by CDK1 and CDK2. 2 disordered regions span residues Pro3231 to Ala3255 and Val3289 to Ser3343. The residue at position 3250 (Ser3250) is a Phosphoserine. Polar residues predominate over residues Val3295 to Thr3310. Positions Ser3318–Leu3334 are enriched in basic and acidic residues.

As to quaternary structure, monomer and dimer. Interacts with RAD51; regulates RAD51 recruitment and function at sites of DNA repair. Interacts with SEM1, WDR16, USP11, DMC1, ROCK2 and NPM1. Interacts with both nonubiquitinated and monoubiquitinated FANCD2; this complex also includes XRCC3 and phosphorylated FANCG. Part of a BRCA complex containing BRCA1, BRCA2 and PALB2. Component of the homologous recombination repair (HR) complex composed of ERCC5/XPG, BRCA2, PALB2, DSS1 and RAD51. Within the complex, interacts with ERCC5/XPG and PALB2. Interacts directly with PALB2 which may serve as a scaffold for a HR complex containing PALB2, BRCA2, RAD51C, RAD51 and XRCC3. Interacts with BRCA1 only in the presence of PALB2 which serves as the bridging protein. Interacts with POLH; the interaction is direct. Interacts with the TREX-2 complex subunits PCID2 and SEM1. Interacts with HSF2BP and BRME1; the interaction with HSF2BP is direct and allows the formation of a ternary complex. The complex BRME1:HSF2BP:BRCA2 interacts with SPATA22, MEIOB and RAD51. Phosphorylated by ATM upon irradiation-induced DNA damage. Phosphorylation by CHEK1 and CHEK2 regulates interaction with RAD51. Phosphorylation at Ser-3222 by CDK1 and CDK2 is low in S phase when recombination is active, but increases as cells progress towards mitosis; this phosphorylation prevents homologous recombination-dependent repair during S phase and G2 by inhibiting RAD51 binding. In terms of processing, ubiquitinated in the absence of DNA damage; this does not lead to proteasomal degradation. In contrast, ubiquitination in response to DNA damage leads to proteasomal degradation. Highest expression in testis. Also expressed in spleen, skeletal muscle, thymus, mammary gland, heart, ovary, prostate, liver, lung, kidney and brain.

The protein localises to the nucleus. The protein resides in the cytoplasm. It localises to the cytoskeleton. It is found in the microtubule organizing center. Its subcellular location is the centrosome. Involved in double-strand break repair and/or homologous recombination. Binds RAD51 and potentiates recombinational DNA repair by promoting assembly of RAD51 onto single-stranded DNA (ssDNA). Acts by targeting RAD51 to ssDNA over double-stranded DNA, enabling RAD51 to displace replication protein-A (RPA) from ssDNA and stabilizing RAD51-ssDNA filaments by blocking ATP hydrolysis. Part of a PALB2-scaffolded HR complex containing RAD51C and which is thought to play a role in DNA repair by HR. May participate in S phase checkpoint activation. Binds selectively to ssDNA, and to ssDNA in tailed duplexes and replication fork structures. May play a role in the extension step after strand invasion at replication-dependent DNA double-strand breaks; together with PALB2 is involved in both POLH localization at collapsed replication forks and DNA polymerization activity. In concert with NPM1, regulates centrosome duplication. Interacts with the TREX-2 complex (transcription and export complex 2) subunits PCID2 and SEM1, and is required to prevent R-loop-associated DNA damage and thus transcription-associated genomic instability, independently of its known role in homologous recombination. The chain is Breast cancer type 2 susceptibility protein homolog from Rattus norvegicus (Rat).